The chain runs to 412 residues: Argininosuccinate synthase (412 aa).

10–18 contacts ATP; it reads AYSGGLDTS. L-citrulline is bound at residue tyrosine 89. Position 119 (glycine 119) interacts with ATP. L-aspartate contacts are provided by threonine 121, asparagine 125, and aspartate 126. Asparagine 125 lines the L-citrulline pocket. 4 residues coordinate L-citrulline: arginine 129, serine 177, glutamate 261, and tyrosine 273.

This sequence belongs to the argininosuccinate synthase family. Type 1 subfamily. As to quaternary structure, homotetramer.

The protein localises to the cytoplasm. The catalysed reaction is L-citrulline + L-aspartate + ATP = 2-(N(omega)-L-arginino)succinate + AMP + diphosphate + H(+). It functions in the pathway amino-acid biosynthesis; L-arginine biosynthesis; L-arginine from L-ornithine and carbamoyl phosphate: step 2/3. The protein is Argininosuccinate synthase of Bifidobacterium longum (strain NCC 2705).